The primary structure comprises 429 residues: Cytochrome bc1 complex Rieske iron-sulfur subunit (429 aa).

The segment at 1 to 45 (MSRADDDAVGVPPTCGGRSDEEERRIVPGPNPQDGAKDGAKATAV) is disordered. Helical transmembrane passes span 96 to 116 (VAVWLLLGGVFGLALLLIFLF), 137 to 157 (PLYGLTFGLSILSIAIGAVLY), and 207 to 227 (FGVGMGAFGLGTLVAFAGGLI). The region spanning 316-410 (RNPVMLIRIK…ITIDTDGYLV (95 aa)) is the Rieske domain. 4 residues coordinate [2Fe-2S] cluster: Cys353, His355, Cys372, and His375. Cys358 and Cys374 are joined by a disulfide.

The protein belongs to the Rieske iron-sulfur protein family. In terms of assembly, the cytochrome bc1 complex is composed of a cytochrome b (QcrB), the Rieske iron-sulfur protein (QcrA) and a diheme cytochrome c (QcrC) subunit. The cofactor is [2Fe-2S] cluster.

It is found in the cell membrane. Its function is as follows. Iron-sulfur subunit of the cytochrome bc1 complex, an essential component of the respiratory electron transport chain required for ATP synthesis. The bc1 complex catalyzes the oxidation of menaquinol and the reduction of cytochrome c in the respiratory chain. The bc1 complex operates through a Q-cycle mechanism that couples electron transfer to generation of the proton gradient that drives ATP synthesis. The chain is Cytochrome bc1 complex Rieske iron-sulfur subunit (qcrA) from Mycobacterium tuberculosis (strain CDC 1551 / Oshkosh).